The chain runs to 83 residues: Exodeoxyribonuclease 7 small subunit (83 aa).

The protein belongs to the XseB family. In terms of assembly, heterooligomer composed of large and small subunits.

It localises to the cytoplasm. It carries out the reaction Exonucleolytic cleavage in either 5'- to 3'- or 3'- to 5'-direction to yield nucleoside 5'-phosphates.. Its function is as follows. Bidirectionally degrades single-stranded DNA into large acid-insoluble oligonucleotides, which are then degraded further into small acid-soluble oligonucleotides. The sequence is that of Exodeoxyribonuclease 7 small subunit from Bradyrhizobium sp. (strain ORS 278).